The primary structure comprises 179 residues: Adenine phosphoribosyltransferase (179 aa).

Belongs to the purine/pyrimidine phosphoribosyltransferase family. As to quaternary structure, homodimer.

The protein resides in the cytoplasm. The enzyme catalyses AMP + diphosphate = 5-phospho-alpha-D-ribose 1-diphosphate + adenine. It participates in purine metabolism; AMP biosynthesis via salvage pathway; AMP from adenine: step 1/1. Functionally, catalyzes a salvage reaction resulting in the formation of AMP, that is energically less costly than de novo synthesis. This is Adenine phosphoribosyltransferase from Actinobacillus pleuropneumoniae serotype 5b (strain L20).